A 97-amino-acid chain; its full sequence is MTDLRHYDVIVSPSITEKSTLVSDFNQVVFNVARTASKPEIKAAVEALFGVKVTAVNTLLRKGKTKRFRGFAGKQKDVKKAIVTLAEGQSIDVSTGL.

This sequence belongs to the universal ribosomal protein uL23 family. Part of the 50S ribosomal subunit. Contacts protein L29, and trigger factor when it is bound to the ribosome.

Functionally, one of the early assembly proteins it binds 23S rRNA. One of the proteins that surrounds the polypeptide exit tunnel on the outside of the ribosome. Forms the main docking site for trigger factor binding to the ribosome. This is Large ribosomal subunit protein uL23 from Allorhizobium ampelinum (strain ATCC BAA-846 / DSM 112012 / S4) (Agrobacterium vitis (strain S4)).